Here is a 161-residue protein sequence, read N- to C-terminus: Allophycocyanin alpha chain (161 aa).

Asparagine 71 is subject to N4-methylasparagine. Cysteine 81 lines the (2R,3E)-phycocyanobilin pocket.

Belongs to the phycobiliprotein family. As to quaternary structure, component of the phycobilisome. Heterodimer of an alpha and a beta chain. Post-translationally, contains one covalently linked phycocyanobilin chromophore.

It localises to the cellular thylakoid membrane. In terms of biological role, light-harvesting photosynthetic bile pigment-protein from the phycobiliprotein complex. Allophycocyanin has a maximum absorption at approximately 650 nanometers. The chain is Allophycocyanin alpha chain (apcA) from Arthrospira platensis (Spirulina platensis).